A 189-amino-acid chain; its full sequence is Segregation and condensation protein B (189 aa).

It belongs to the ScpB family. As to quaternary structure, homodimer. Homodimerization may be required to stabilize the binding of ScpA to the Smc head domains. Component of a cohesin-like complex composed of ScpA, ScpB and the Smc homodimer, in which ScpA and ScpB bind to the head domain of Smc. The presence of the three proteins is required for the association of the complex with DNA.

It is found in the cytoplasm. In terms of biological role, participates in chromosomal partition during cell division. May act via the formation of a condensin-like complex containing Smc and ScpA that pull DNA away from mid-cell into both cell halves. In Streptococcus mitis, this protein is Segregation and condensation protein B.